The chain runs to 230 residues: Ubiquitin carboxyl-terminal hydrolase isozyme L3 (230 aa).

Positions 5 to 229 constitute a UCH catalytic domain; sequence RWLPLEANPE…LRFNAIALSA (225 aa). The segment at 8–13 is interaction with ubiquitin; the sequence is PLEANP. The Nucleophile role is filled by Cys-95. Ser-130 carries the post-translational modification Phosphoserine. The interaction with ubiquitin. Crossover loop which restricts access of large ubiquitin adducts to the active site stretch occupies residues 152 to 159; the sequence is AHEGQTEA. His-169 serves as the catalytic Proton donor. Residues 219 to 224 are interaction with ubiquitin; it reads ELRFNA.

Belongs to the peptidase C12 family. As to quaternary structure, preferentially binds diubiquitin; the interaction does not hydrolyze diubiquitin but, in vitro, inhibits the hydrolyzing activity on other substrates. In terms of tissue distribution, ubiquitously expressed, with highest levels in brain, liver, heart, thymus, kidney and testis. Highly expressed in the cauda epididymidis, in meiotic pachytene spermatocytes and post-meiotic spematids. In the retina, enriched in the photoreceptor inner segment.

The protein resides in the cytoplasm. The catalysed reaction is Thiol-dependent hydrolysis of ester, thioester, amide, peptide and isopeptide bonds formed by the C-terminal Gly of ubiquitin (a 76-residue protein attached to proteins as an intracellular targeting signal).. With respect to regulation, inhibited by monoubiquitin and diubiquitin. Deubiquitinating enzyme (DUB) that controls levels of cellular ubiquitin through processing of ubiquitin precursors and ubiquitinated proteins. Thiol protease that recognizes and hydrolyzes a peptide bond at the C-terminal glycine of either ubiquitin or NEDD8. Has a 10-fold preference for Arg and Lys at position P3'', and exhibits a preference towards 'Lys-48'-linked ubiquitin chains. Deubiquitinates ENAC in apical compartments, thereby regulating apical membrane recycling. Indirectly increases the phosphorylation of IGFIR, AKT and FOXO1 and promotes insulin-signaling and insulin-induced adipogenesis. Required for stress-response retinal, skeletal muscle and germ cell maintenance. May be involved in working memory. Can hydrolyze UBB(+1), a mutated form of ubiquitin which is not effectively degraded by the proteasome. In Mus musculus (Mouse), this protein is Ubiquitin carboxyl-terminal hydrolase isozyme L3 (Uchl3).